Here is a 307-residue protein sequence, read N- to C-terminus: Protein Y (307 aa).

Belongs to the ATP-dependent AMP-binding enzyme family.

The protein operates within antibiotic biosynthesis; candicidin biosynthesis. In terms of biological role, may be a p-aminobenzoic acid-CoA ligase that activates PabA to start the biosynthesis of candicidin. The chain is Protein Y from Streptomyces griseus.